A 249-amino-acid chain; its full sequence is MKKYQFEVCANSVESCLAAQAGGADRVELCAGIPEGGTTPSYGEISTARDMLTTTRLHVIIRPRGGDFLYSPIEVRTMLKDIEMARQLGADGVVFGCLTANGEIDLPVMQELMKASQGLSVTFHRAFDICRDPEKALEQIIELGCNRILTSGQQATAELGIPLLKALQTQASGRIILLAGCGVNEKNIARIASETGIQEFHFSARESIKSDMKYKNESVSMGGTVHIDEYERNVTTAQRVINTIQAIKS.

The protein belongs to the CutC family.

The protein resides in the cytoplasm. This chain is PF03932 family protein CutC, found in Bacteroides thetaiotaomicron (strain ATCC 29148 / DSM 2079 / JCM 5827 / CCUG 10774 / NCTC 10582 / VPI-5482 / E50).